The chain runs to 547 residues: MSQSSGGTSTPTTTATQPTSTSTQTPGTTQLLSTTSTPTTTATQPTSTSTQTPGTTQLPSTTSTPTTTATQPTXTSTQTPGTTQLPGTTSTPTTTATQPTSTSFQTPGTTQLPSSTSTPTTTATQPTSTASQTPGTTQPPGGASSPTTTVTQPTGSSSQTPGTTQPPGGASTPTTTVTQPTGSSSQTSGTTQPPGGASSSTVTSSSSTGSNDPCNSNPCKSPASCVKLYDSYFCLCLEGYYYNNSSSCVKGTTFPGEIGMSVNETTDLEDKNSVNYQTLHSSVVKFFENTFKKTDYGQTVILKVSKDSLMSSRSVMRAATQTVYVSVVNMFGENTKEDEESVASVIKEAVKTDNNVERYFQQDRCDYYGCVKSGSNVCRNGLQCTCKPGLERLNPQVPFCVAPTCSEPCSAEKKQLCLKKDNGAMECGCMAGYRKANGKCEECPFGYSGMDCKDQFQLILTIVGTIAGAFILILLIVFIVSMRSKNKKKSGEEQNLIEDDFHNLRMRPTGFSNFGADTSIFPKVKTGVPSQTSNPYANHRSMPRPDY.

Positions 1 to 210 (MSQSSGGTST…TVTSSSSTGS (210 aa)) are enriched in low complexity. Positions 1–218 (MSQSSGGTST…GSNDPCNSNP (218 aa)) are disordered. The 40-residue stretch at 210 to 249 (SNDPCNSNPCKSPASCVKLYDSYFCLCLEGYYYNNSSSCV) folds into the EGF-like 1 domain. 3 disulfides stabilise this stretch: C214/C225, C219/C234, and C236/C248. N-linked (GlcNAc...) asparagine glycosylation is found at N243, N244, and N263. An SEA domain is found at 250–366 (KGTTFPGEIG…ERYFQQDRCD (117 aa)). 2 consecutive EGF-like domains span residues 361-401 (QQDR…PFCV) and 401-441 (VAPT…GKCE). Disulfide bonds link C365-C378, C370-C384, C386-C400, C409-C427, and C429-C440. The helical transmembrane segment at 459 to 479 (ILTIVGTIAGAFILILLIVFI) threads the bilayer. The Cytoplasmic segment spans residues 480–547 (VSMRSKNKKK…NHRSMPRPDY (68 aa)). The tract at residues 525–547 (KTGVPSQTSNPYANHRSMPRPDY) is disordered.

As to quaternary structure, homodimer of beta subunits. Cleaved into two subunits, alpha and beta, probably between the first EGF domain and the SEA domain. Beta subunit contains the cytoplasmic tail and alpha subunit the extracellular tail. The homooligomerization into dimers is dependent on intrachain disulfide bonds. Post-translationally, highly glycosylated.

The protein resides in the cell membrane. Its subcellular location is the secreted. Epithelial and hemopoietic transmembrane mucin that may play a role in cell signaling. The protein is Mucin-13 (Muc13) of Rattus norvegicus (Rat).